The sequence spans 342 residues: S-adenosylmethionine:tRNA ribosyltransferase-isomerase (342 aa).

The protein belongs to the QueA family. In terms of assembly, monomer.

The protein resides in the cytoplasm. The catalysed reaction is 7-aminomethyl-7-carbaguanosine(34) in tRNA + S-adenosyl-L-methionine = epoxyqueuosine(34) in tRNA + adenine + L-methionine + 2 H(+). The protein operates within tRNA modification; tRNA-queuosine biosynthesis. Functionally, transfers and isomerizes the ribose moiety from AdoMet to the 7-aminomethyl group of 7-deazaguanine (preQ1-tRNA) to give epoxyqueuosine (oQ-tRNA). This chain is S-adenosylmethionine:tRNA ribosyltransferase-isomerase, found in Listeria monocytogenes serovar 1/2a (strain ATCC BAA-679 / EGD-e).